The following is a 253-amino-acid chain: Type III pantothenate kinase (253 aa).

6–13 (DVGNTNIV) is a binding site for ATP. 107–110 (GADR) provides a ligand contact to substrate. D109 serves as the catalytic Proton acceptor. D129 provides a ligand contact to K(+). T132 lines the ATP pocket. Residue T184 coordinates substrate.

It belongs to the type III pantothenate kinase family. Homodimer. NH4(+) serves as cofactor. The cofactor is K(+).

It localises to the cytoplasm. It carries out the reaction (R)-pantothenate + ATP = (R)-4'-phosphopantothenate + ADP + H(+). It participates in cofactor biosynthesis; coenzyme A biosynthesis; CoA from (R)-pantothenate: step 1/5. In terms of biological role, catalyzes the phosphorylation of pantothenate (Pan), the first step in CoA biosynthesis. The polypeptide is Type III pantothenate kinase (Exiguobacterium sibiricum (strain DSM 17290 / CCUG 55495 / CIP 109462 / JCM 13490 / 255-15)).